The sequence spans 143 residues: Large ribosomal subunit protein uL13 (143 aa).

This sequence belongs to the universal ribosomal protein uL13 family. Part of the 50S ribosomal subunit.

This protein is one of the early assembly proteins of the 50S ribosomal subunit, although it is not seen to bind rRNA by itself. It is important during the early stages of 50S assembly. The chain is Large ribosomal subunit protein uL13 from Chloroflexus aggregans (strain MD-66 / DSM 9485).